A 329-amino-acid chain; its full sequence is Probable CTD kinase subunit alpha homolog (329 aa).

The Protein kinase domain maps to 22-297; it reads YEKIRIIGEG…VEQVVGSKYF (276 aa). ATP is bound by residues 28-36 and Lys-49; that span reads IGEGTFGQV. Catalysis depends on Asp-139, which acts as the Proton acceptor.

It belongs to the protein kinase superfamily. CMGC Ser/Thr protein kinase family. CDC2/CDKX subfamily. In terms of assembly, component of the CTDK-I complex.

It localises to the nucleus. The protein resides in the nucleolus. The catalysed reaction is [DNA-directed RNA polymerase] + ATP = phospho-[DNA-directed RNA polymerase] + ADP + H(+). Its function is as follows. Catalytic subunit of the CTDK-I complex, which hyperphosphorylates the C-terminal heptapeptide repeat domain (CTD) of the largest RNA polymerase II subunit. Involved in RNA polymerase II transcriptional elongation and pre-mRNA 3'-end processing. The sequence is that of Probable CTD kinase subunit alpha homolog (CTK1) from Encephalitozoon cuniculi (strain GB-M1) (Microsporidian parasite).